The primary structure comprises 357 residues: Mitogen-activated protein kinase HOG1 (357 aa).

Residues 20–299 (YSDLQPVGMG…ATEALAHDYL (280 aa)) form the Protein kinase domain. ATP is bound by residues 26 to 34 (VGMGAFGLV) and Lys-49. Asp-141 acts as the Proton acceptor in catalysis. Thr-171 bears the Phosphothreonine mark. Residues 171–173 (TGY) carry the TXY motif. Tyr-173 bears the Phosphotyrosine mark.

Belongs to the protein kinase superfamily. Ser/Thr protein kinase family. MAP kinase subfamily. HOG1 sub-subfamily. Requires Mg(2+) as cofactor. Post-translationally, dually phosphorylated on Thr-171 and Tyr-173, which activates the enzyme.

The protein localises to the cytoplasm. It localises to the nucleus. The enzyme catalyses L-seryl-[protein] + ATP = O-phospho-L-seryl-[protein] + ADP + H(+). It catalyses the reaction L-threonyl-[protein] + ATP = O-phospho-L-threonyl-[protein] + ADP + H(+). With respect to regulation, activated by tyrosine and threonine phosphorylation. Proline-directed serine/threonine-protein kinase involved in a signal transduction pathway that is activated by changes in the osmolarity of the extracellular environment. Controls osmotic regulation of transcription of target genes. The polypeptide is Mitogen-activated protein kinase HOG1 (HOG1) (Gibberella zeae (strain ATCC MYA-4620 / CBS 123657 / FGSC 9075 / NRRL 31084 / PH-1) (Wheat head blight fungus)).